A 187-amino-acid chain; its full sequence is dITP/XTP pyrophosphatase (187 aa).

Substrate is bound at residue 7–12 (TGNKHK). Mg(2+)-binding residues include Glu36 and Asp64. Residue Asp64 is the Proton acceptor of the active site. Residues Ala65, 140–143 (FAFD), Lys163, and 168–169 (HR) each bind substrate.

The protein belongs to the HAM1 NTPase family. Homodimer. Requires Mg(2+) as cofactor.

It catalyses the reaction XTP + H2O = XMP + diphosphate + H(+). It carries out the reaction dITP + H2O = dIMP + diphosphate + H(+). The enzyme catalyses ITP + H2O = IMP + diphosphate + H(+). Functionally, pyrophosphatase that catalyzes the hydrolysis of nucleoside triphosphates to their monophosphate derivatives, with a high preference for the non-canonical purine nucleotides XTP (xanthosine triphosphate), dITP (deoxyinosine triphosphate) and ITP. Seems to function as a house-cleaning enzyme that removes non-canonical purine nucleotides from the nucleotide pool, thus preventing their incorporation into DNA/RNA and avoiding chromosomal lesions. The polypeptide is dITP/XTP pyrophosphatase (Methanothermobacter marburgensis (strain ATCC BAA-927 / DSM 2133 / JCM 14651 / NBRC 100331 / OCM 82 / Marburg) (Methanobacterium thermoautotrophicum)).